A 282-amino-acid polypeptide reads, in one-letter code: Putative hydrolase Bcen_5340 (282 aa).

The Mg(2+) site is built by Glu-124, Glu-126, and Asp-155.

The protein belongs to the FAH family. Mg(2+) is required as a cofactor.

In Burkholderia orbicola (strain AU 1054), this protein is Putative hydrolase Bcen_5340.